A 158-amino-acid polypeptide reads, in one-letter code: Small ribosomal subunit protein uS17 (158 aa).

The residue at position 2 (alanine 2) is an N-acetylalanine. Arginine 22 bears the Citrulline mark. 3 positions are modified to N6-acetyllysine: lysine 38, lysine 45, and lysine 58. Cysteine 60 carries the S-palmitoyl cysteine lipid modification. Serine 67 bears the Phosphoserine mark. An Omega-N-methylarginine modification is found at arginine 69. Serine 110 is subject to Phosphoserine.

It belongs to the universal ribosomal protein uS17 family. In terms of assembly, component of the small ribosomal subunit. Part of the small subunit (SSU) processome, composed of more than 70 proteins and the RNA chaperone small nucleolar RNA (snoRNA) U3. Post-translationally, citrullinated by PADI4.

It is found in the cytoplasm. The protein resides in the nucleus. The protein localises to the nucleolus. In terms of biological role, component of the small ribosomal subunit. The ribosome is a large ribonucleoprotein complex responsible for the synthesis of proteins in the cell. Part of the small subunit (SSU) processome, first precursor of the small eukaryotic ribosomal subunit. During the assembly of the SSU processome in the nucleolus, many ribosome biogenesis factors, an RNA chaperone and ribosomal proteins associate with the nascent pre-rRNA and work in concert to generate RNA folding, modifications, rearrangements and cleavage as well as targeted degradation of pre-ribosomal RNA by the RNA exosome. The sequence is that of Small ribosomal subunit protein uS17 (RPS11) from Canis lupus familiaris (Dog).